The sequence spans 689 residues: Glycine--tRNA ligase beta subunit (689 aa).

It belongs to the class-II aminoacyl-tRNA synthetase family. Tetramer of two alpha and two beta subunits.

The protein resides in the cytoplasm. The enzyme catalyses tRNA(Gly) + glycine + ATP = glycyl-tRNA(Gly) + AMP + diphosphate. The chain is Glycine--tRNA ligase beta subunit from Shewanella woodyi (strain ATCC 51908 / MS32).